Consider the following 20-residue polypeptide: Pregnancy-associated glycoprotein 67A (20 aa).

N-linked (GlcNAc...) asparagine glycosylation is found at Asn4 and Asn20.

The protein belongs to the peptidase A1 family. As to expression, chorionic epithelium (trophectoderm) and placental cotyledons.

The protein localises to the secreted. Its subcellular location is the extracellular space. This is Pregnancy-associated glycoprotein 67A from Bison bonasus (European bison).